We begin with the raw amino-acid sequence, 48 residues long: Small, acid-soluble spore protein O (48 aa).

The tract at residues 1 to 23 (MTKRKANHVINGMNAAKSQGNGA) is disordered.

Belongs to the SspO family.

It localises to the spore core. The protein is Small, acid-soluble spore protein O of Bacillus pumilus (strain SAFR-032).